A 623-amino-acid chain; its full sequence is MKTCYYDLLEVRSDASDLDLKKAYRRKALQYHPDKNPDNVEEATTIFAEIRAAYEVLSDPQERAWYDSHKEQILSDTPLNPNDEDDDYVVDSTVTGVTTEELMMFFNSSLYTSIDNSPAGFYQIAGKVFAKIAKDEVSWGLRLGLDGYKNYKDMEFEEHINSRGYILACDSSKANLSNLLFPIFGYSSTSYEELKLFYTKWSSFNTLKSFTWKDEYMYSRNYDRRTKREINKRNEKARAKAKEEYIKTVKRYVNFIKKLDQRMKEGAKKAAEKRLADERLRKENEMKLRKERLNNEQGAQFHLQSWQTIDQENWKELEKQYEKEFEKRNVDKDDELIGHEFTKNQFQTNNNSQHEDVDEIIIYDCFICKKSFKSEKQLENHIKTKLHKRNLDRVQKEMKKDSMALGLDELSDYNDFDSAESETEKLYSGMDLNDIDAELKKIEEQLAQSSVTDSEDFTDDNNDTEDQNSLVDKLSNTNYDIEIDDEINDDTNEEVQISGADNSETQNAEQDHDSNGDSEEEKEDELTRILRELEESKTSRSNFSDSDEEWSNKKKTKAKKKKNKANTPDKQPVTANKNDAKEVCGECRAEFESRNQLFSHIQTEGHVSPLSKVKKGKRSKKNK.

The region spanning 4 to 70 (CYYDLLEVRS…QERAWYDSHK (67 aa)) is the J domain. The C2H2-type zinc finger occupies 363–387 (YDCFICKKSFKSEKQLENHIKTKLH). Disordered stretches follow at residues 448-476 (QSSVTDSEDFTDDNNDTEDQNSLVDKLSN), 499-581 (GADN…NDAK), and 599-623 (SHIQTEGHVSPLSKVKKGKRSKKNK). A compositionally biased stretch (acidic residues) spans 453 to 466 (DSEDFTDDNNDTED). Over residues 499–508 (GADNSETQNA) the composition is skewed to polar residues. Residues 525-538 (ELTRILRELEESKT) are compositionally biased toward basic and acidic residues. Composition is skewed to basic residues over residues 553 to 564 (KKKTKAKKKKNK) and 612 to 623 (KVKKGKRSKKNK).

It is found in the nucleus. Functionally, acts as a negative regulator of fluconazole resistance, primarily through down-regulation of the ABC transporter gene CDR1 via inactivation of the PDR1 transcriptional pathway. This Candida glabrata (strain ATCC 2001 / BCRC 20586 / JCM 3761 / NBRC 0622 / NRRL Y-65 / CBS 138) (Yeast) protein is Negative regulator of PDR1-mediated fluconazole resistance JJJ1.